A 1141-amino-acid polypeptide reads, in one-letter code: LRR receptor-like serine/threonine-protein kinase RGI1 (1141 aa).

An N-terminal signal peptide occupies residues 1 to 33; that stretch reads MSLHSLIFFSSSSSSLLFSFFFIFIFCFSLSDA. Topologically, residues 34-726 are extracellular; that stretch reads EQNPEASILY…DASRTRKLRL (693 aa). C69 and C77 are joined by a disulfide. A glycan (N-linked (GlcNAc...) asparagine) is linked at N71. LRR repeat units follow at residues 80–104, 105–128, 130–152, 153–176, 178–200, 202–225, 226–249, 250–273, 275–297, 298–321, 322–345, 347–369, 370–392, 394–417, 418–441, 443–464, 465–489, 490–513, 514–537, 538–561, 563–585, 586–609, 610–634, 636–657, and 658–682; these read QGFI…LPAF, RSLQ…LGDC, GLKV…LSKL, RNLE…ISKC, KLKS…LGKL, GLEV…IGDC, SNLT…LGKL, KKLE…LGNC, ELVD…IGQL, TKLE…IGNC, SNLK…IGRL, FLEE…ISNC, SSLV…ELGT, TKLT…LADC, TDLQ…LFML, NLTK…EIGN, CSSL…IGSL, KKIN…IGSC, SELQ…VSSL, SGLQ…LGRL, SLNK…LGMC, SGLQ…LGDI, ENLE…IASL, KLSI…LANI, and ENLV…LFRQ. The N-linked (GlcNAc...) asparagine glycan is linked to N116. 2 short sequence motifs (small peptide recognition) span residues 185-186 and 207-210; these read FD and RIGG. N-linked (GlcNAc...) asparagine glycosylation occurs at N227. Short sequence motifs (small peptide recognition) lie at residues 230–235 and Y258; that span reads VLGLAE. N-linked (GlcNAc...) asparagine glycosylation is present at N272. The short motif at 280 to 282 is the Small peptide recognition element; it reads FLY. An N-linked (GlcNAc...) asparagine glycan is attached at N320. Short sequence motifs (small peptide recognition) lie at residues 328 to 331 and 350 to 352; these read DLSL and EFM. N-linked (GlcNAc...) asparagine glycosylation occurs at N368. 2 consecutive short sequence motifs (small peptide recognition) follow at residues 398–402 and 424–427; these read LFFAW and DLSR. A glycan (N-linked (GlcNAc...) asparagine) is linked at N443. A Small peptide recognition motif is present at residues 446–450; it reads KLLLI. N-linked (GlcNAc...) asparagine glycosylation occurs at N464. Positions 470 to 472 match the Small peptide recognition motif; sequence RLR. N-linked (GlcNAc...) asparagine glycosylation is present at N523. The N-linked (GlcNAc...) asparagine glycan is linked to N617. N664 is a glycosylation site (N-linked (GlcNAc...) asparagine). Residues 727–747 traverse the membrane as a helical segment; sequence TLALLITLTVVLMILGAVAVI. The Cytoplasmic portion of the chain corresponds to 748–1141; it reads RARRNIDNER…LLYSSSSSIE (394 aa). The 289-residue stretch at 786–1074 folds into the Protein kinase domain; the sequence is LVEPNVIGKG…EIKQEREEYA (289 aa). ATP contacts are provided by residues 792-800 and K814; that span reads IGKGCSGVV. Phosphotyrosine occurs at positions 868 and 906. D919 functions as the Proton acceptor in the catalytic mechanism. A phosphotyrosine mark is found at Y962 and Y969.

Belongs to the protein kinase superfamily. Ser/Thr protein kinase family. In terms of assembly, interacts with beet curly top virus AL4/C4. Binds to RGF peptides such as RGF1, GLV5/CLEL1/RGF2, GLV7/CLEL3/RGF3, GLV3/RGF4, GLV10/CLEL7/RGF5 and RGF10/CLELN; these interactions trigger the formation of heterodimers with SERK1, SERK2 or BAK1/SERK3 via LRR regions. Interacts with UBP13. In terms of processing, phosphorylated and ubiquitinated upon interaction with RGF1, thus leading to activation a subsequent degradation. Stabilized by UBP12 and UBP13-mediated deubiquitination. Autophosphorylated. Expressed in roots.

The protein resides in the cell membrane. It carries out the reaction L-seryl-[protein] + ATP = O-phospho-L-seryl-[protein] + ADP + H(+). It catalyses the reaction L-threonyl-[protein] + ATP = O-phospho-L-threonyl-[protein] + ADP + H(+). In terms of biological role, together with RGI2, RGI3, RGI4 and RGI5, acts as a receptor of RGF peptides (e.g. RGF1, GLV5/CLEL1/RGF2, GLV7/CLEL3/RGF3, GLV3/RGF4, GLV10/CLEL7/RGF5 and RGF10/CLELN), peptide hormones which maintain the postembryonic root stem cell niche by regulating the expression levels and patterns of the transcription factor PLETHORA (PLT, e.g. PLT1 and PLT2). Links RGF peptides signal with their downstream components. This Arabidopsis thaliana (Mouse-ear cress) protein is LRR receptor-like serine/threonine-protein kinase RGI1.